Reading from the N-terminus, the 587-residue chain is Adenine deaminase (587 aa).

The protein belongs to the metallo-dependent hydrolases superfamily. Adenine deaminase family. Requires Mn(2+) as cofactor.

It catalyses the reaction adenine + H2O + H(+) = hypoxanthine + NH4(+). In Shewanella halifaxensis (strain HAW-EB4), this protein is Adenine deaminase.